The primary structure comprises 602 residues: Bifunctional lycopene cyclase/phytoene synthase (602 aa).

The tract at residues 1 to 241 (MYDYAFVHLK…IVGGMAAFDQ (241 aa)) is lycopene beta-cyclase. The next 7 membrane-spanning stretches (helical) occupy residues 6-26 (FVHLKFTVPAAVLLTAIAYPI), 30-50 (IHLIQTGFLVVVAFTAALPWD), 76-96 (FEELFFFVIQTYITALVYILF), 118-138 (VVKVTGQVVLVALSVWGWNAA), 146-166 (YLGLILVWACPFLLAIWTLAG), 168-188 (FILSLPWYATVLPMFLPTFYL), and 230-250 (MLIVGGMAAFDQYLAVIYAFP). A phytoene synthase region spans residues 248–602 (AFPTLFPKVN…STLLRALYEQ (355 aa)).

This sequence in the N-terminal section; belongs to the lycopene beta-cyclase family. The protein in the C-terminal section; belongs to the phytoene/squalene synthase family.

It is found in the membrane. It catalyses the reaction all-trans-lycopene = gamma-carotene. It carries out the reaction gamma-carotene = all-trans-beta-carotene. The enzyme catalyses 2 (2E,6E,10E)-geranylgeranyl diphosphate = 15-cis-phytoene + 2 diphosphate. It participates in carotenoid biosynthesis; beta-carotene biosynthesis. It functions in the pathway carotenoid biosynthesis; phytoene biosynthesis; all-trans-phytoene from geranylgeranyl diphosphate: step 1/1. In terms of biological role, bifunctional enzyme that catalyzes the reactions from geranylgeranyl diphosphate to phytoene (phytoene synthase) and from lycopene to beta-carotene via the intermediate gamma-carotene and from 3,4-didehydrolycopene to torulene (lycopene cyclase). Torulene is further processed to the acidic carotenoid neurosporaxanthin. The cyclase preferentially catalyzes single cyclizations at only one end of the substrate to produce monocyclic carotenoids. Neurosporaxanthin is synthesized from geranyl-geranyl pyrophosphate (GGPP) through several enzymatic activities. Phytoene synthase activity performed by the bifunctional enzyme al-2 first produces phytoene from geranyl-geranyl pyrophosphate (GGPP). The phytoene dehydrogenase al-1 then introduces 5 desaturations to lead to 3,4-didehydrolycopene via the intermediates phytofluene, zeta-carotene, neurosporene and lycopene. Al-2 cyclase activity then converts 3,4-didehydrolycopene into torulene. Al-2 can also convet lycopene into gamma-carotene which in turn is converted to beta-carotene by an additional al-2 cyclization reaction. Torulene is the substrate of the dioxidase cao-2 that breaks the molecule, removing five carbon atoms to yield beta-apo-4'-carotenal, whereas the aldehyde dehydrogenase ylo-1 mediates the last step by converting beta-apo-4'-carotenal into neurosporaxanthin. In Neurospora crassa (strain ATCC 24698 / 74-OR23-1A / CBS 708.71 / DSM 1257 / FGSC 987), this protein is Bifunctional lycopene cyclase/phytoene synthase.